The sequence spans 475 residues: Ribulose bisphosphate carboxylase large chain (475 aa).

Positions 1-2 are excised as a propeptide; the sequence is MS. At proline 3 the chain carries N-acetylproline. An N6,N6,N6-trimethyllysine modification is found at lysine 14. 2 residues coordinate substrate: asparagine 123 and threonine 173. The active-site Proton acceptor is the lysine 175. Position 177 (lysine 177) interacts with substrate. Lysine 201, aspartate 203, and glutamate 204 together coordinate Mg(2+). At lysine 201 the chain carries N6-carboxylysine. Histidine 294 serves as the catalytic Proton acceptor. Positions 295, 327, and 379 each coordinate substrate.

This sequence belongs to the RuBisCO large chain family. Type I subfamily. As to quaternary structure, heterohexadecamer of 8 large chains and 8 small chains; disulfide-linked. The disulfide link is formed within the large subunit homodimers. The cofactor is Mg(2+). The disulfide bond which can form in the large chain dimeric partners within the hexadecamer appears to be associated with oxidative stress and protein turnover.

It localises to the plastid. The protein localises to the chloroplast. The catalysed reaction is 2 (2R)-3-phosphoglycerate + 2 H(+) = D-ribulose 1,5-bisphosphate + CO2 + H2O. It carries out the reaction D-ribulose 1,5-bisphosphate + O2 = 2-phosphoglycolate + (2R)-3-phosphoglycerate + 2 H(+). Functionally, ruBisCO catalyzes two reactions: the carboxylation of D-ribulose 1,5-bisphosphate, the primary event in carbon dioxide fixation, as well as the oxidative fragmentation of the pentose substrate in the photorespiration process. Both reactions occur simultaneously and in competition at the same active site. The sequence is that of Ribulose bisphosphate carboxylase large chain from Tsuga heterophylla (Western hemlock).